The following is a 206-amino-acid chain: Large ribosomal subunit protein uL4 (206 aa).

The tract at residues 47–75 (GTQSAKTRAEVSGGGIKPWRQKGTGRARQ) is disordered.

It belongs to the universal ribosomal protein uL4 family. As to quaternary structure, part of the 50S ribosomal subunit.

One of the primary rRNA binding proteins, this protein initially binds near the 5'-end of the 23S rRNA. It is important during the early stages of 50S assembly. It makes multiple contacts with different domains of the 23S rRNA in the assembled 50S subunit and ribosome. Its function is as follows. Forms part of the polypeptide exit tunnel. The protein is Large ribosomal subunit protein uL4 of Clostridium botulinum (strain ATCC 19397 / Type A).